The chain runs to 440 residues: Serine hydroxymethyltransferase (440 aa).

Residues leucine 119 and 123–125 (GHL) each bind (6S)-5,6,7,8-tetrahydrofolate. Residue lysine 228 is modified to N6-(pyridoxal phosphate)lysine. 370-372 (SPF) provides a ligand contact to (6S)-5,6,7,8-tetrahydrofolate.

The protein belongs to the SHMT family. As to quaternary structure, homodimer. Pyridoxal 5'-phosphate is required as a cofactor.

The protein resides in the cytoplasm. The enzyme catalyses (6R)-5,10-methylene-5,6,7,8-tetrahydrofolate + glycine + H2O = (6S)-5,6,7,8-tetrahydrofolate + L-serine. The protein operates within one-carbon metabolism; tetrahydrofolate interconversion. It functions in the pathway amino-acid biosynthesis; glycine biosynthesis; glycine from L-serine: step 1/1. Its function is as follows. Catalyzes the reversible interconversion of serine and glycine with tetrahydrofolate (THF) serving as the one-carbon carrier. This reaction serves as the major source of one-carbon groups required for the biosynthesis of purines, thymidylate, methionine, and other important biomolecules. Also exhibits THF-independent aldolase activity toward beta-hydroxyamino acids, producing glycine and aldehydes, via a retro-aldol mechanism. The sequence is that of Serine hydroxymethyltransferase from Chlorobaculum parvum (strain DSM 263 / NCIMB 8327) (Chlorobium vibrioforme subsp. thiosulfatophilum).